We begin with the raw amino-acid sequence, 404 residues long: Coenzyme F420H(2) oxidase (404 aa).

Fe cation-binding residues include His-83, Glu-85, Asp-87, His-88, His-151, Asp-170, and His-233. Residues 259 to 399 (VTVIYDTMHG…ACFEAGRKLA (141 aa)) enclose the Flavodoxin-like domain. FMN-binding positions include 265–270 (TMHGST), 317–320 (TIYD), and 351–356 (SMGGNG).

It in the N-terminal section; belongs to the zinc metallo-hydrolase group 3 family. In terms of assembly, homodimer. Homotetramer. The tetramer is composed of two functional dimers. Requires FMN as cofactor. The cofactor is Fe cation.

The catalysed reaction is 2 reduced coenzyme F420-(gamma-L-Glu)(n) + O2 = 2 oxidized coenzyme F420-(gamma-L-Glu)(n) + 2 H2O + 2 H(+). Its function is as follows. Catalyzes the oxidation of F420H(2) with O(2). May be involved in O(2) detoxification, reducing the intracellular O(2) concentration to a level allowing growth at the expense of methane formation. The sequence is that of Coenzyme F420H(2) oxidase from Methanothermobacter marburgensis (strain ATCC BAA-927 / DSM 2133 / JCM 14651 / NBRC 100331 / OCM 82 / Marburg) (Methanobacterium thermoautotrophicum).